We begin with the raw amino-acid sequence, 28 residues long: Peptide 2 (28 aa).

Belongs to the short scorpion toxin superfamily. Potassium channel inhibitor family. Alpha-KTx 09 subfamily. As to expression, expressed by the venom gland.

Its subcellular location is the secreted. Functionally, blocks potassium channels. This Hottentotta tamulus sindicus (Scorpion) protein is Peptide 2.